The sequence spans 348 residues: Ion-translocating oxidoreductase complex subunit D (348 aa).

3 helical membrane-spanning segments follow: residues 20 to 39 (VMRL…CYLF), 67 to 87 (YVVS…LIAV), and 124 to 144 (AMVG…NWMA). Thr-187 is subject to FMN phosphoryl threonine. 4 helical membrane passes run 221 to 241 (WINL…LIPW), 244 to 264 (PVAM…LAPA), 266 to 286 (FAMP…FFII), and 300 to 320 (LVFG…GGYP).

The protein belongs to the NqrB/RnfD family. The complex is composed of six subunits: RnfA, RnfB, RnfC, RnfD, RnfE and RnfG. Requires FMN as cofactor.

It is found in the cell inner membrane. Part of a membrane-bound complex that couples electron transfer with translocation of ions across the membrane. The protein is Ion-translocating oxidoreductase complex subunit D of Tolumonas auensis (strain DSM 9187 / NBRC 110442 / TA 4).